The sequence spans 126 residues: Fluoride-specific ion channel FluC (126 aa).

4 helical membrane-spanning segments follow: residues 4 to 24 (PLLSIALGSVLGAWLRWFLGL), 33 to 53 (IPLGTVTVNLVGGFIIGFAMA), 67 to 87 (FVITGFCGALTTFSTFSIEIV), and 97 to 117 (MAMLAISIHLIGSLIFTCLGL). The Na(+) site is built by Gly-74 and Thr-77.

The protein belongs to the fluoride channel Fluc/FEX (TC 1.A.43) family.

The protein localises to the cell inner membrane. The enzyme catalyses fluoride(in) = fluoride(out). Na(+) is not transported, but it plays an essential structural role and its presence is essential for fluoride channel function. In terms of biological role, fluoride-specific ion channel. Important for reducing fluoride concentration in the cell, thus reducing its toxicity. The protein is Fluoride-specific ion channel FluC of Acinetobacter baumannii (strain AB307-0294).